The sequence spans 691 residues: ATP-dependent RNA helicase MRH4, mitochondrial (691 aa).

A mitochondrion-targeting transit peptide spans 1-31 (MLIGQVSRLSAIPPLALQHTLRPLHSSSVLA). Residues 31 to 148 (AAGGKRPKQS…ATMPPNLTPR (118 aa)) form a disordered region. Residues 39 to 49 (QSPSHSRNSPR) are compositionally biased toward polar residues. Over residues 50–68 (QKPDWEKRGSNRGRSEQPR) the composition is skewed to basic and acidic residues. Low complexity predominate over residues 94-103 (SDSSSGSSAS). The segment covering 111–126 (VPTSSRRLLPFSSSDT) has biased composition (polar residues). Residues 183 to 213 (RTFDDFGLEEGLVKSLKGLYGEDGKTTPIET) carry the Q motif motif. Residues 225–433 (ASAPIGSQRV…TTNPFFTKKE (209 aa)) form the Helicase ATP-binding domain. Residue 238–245 (AETGSGKT) participates in ATP binding. The DEAD box motif lies at 382 to 385 (DEAD). Residues 474–691 (TLAEDAKAAK…VGAMGKRVRT (218 aa)) enclose the Helicase C-terminal domain. Positions 644 to 667 (LGEGAKNNKGGKGQGPLKKDGKTA) are disordered.

Belongs to the DEAD box helicase family. MRH4 subfamily.

The protein resides in the mitochondrion. The enzyme catalyses ATP + H2O = ADP + phosphate + H(+). ATP-binding RNA helicase involved in mitochondrial RNA metabolism. Required for maintenance of mitochondrial DNA. In Cryptococcus neoformans var. neoformans serotype D (strain JEC21 / ATCC MYA-565) (Filobasidiella neoformans), this protein is ATP-dependent RNA helicase MRH4, mitochondrial (MRH4).